The chain runs to 252 residues: MILHAQAKHGKPGLPWLVFLHGFSGDCHEWQEVGEAFADYSRLYVDLPGHGGSAAISVDGFDDVTDLLRKTLVSYNILDFWLVGYSLGGRVAMMATCQGLAGLCGVIVEGGHPGLQNAEQRAERQRSDRQWVQRFLTEPLTAVFADWYQQPVFASLNDDQRRELVALRSNNNGATLAAMLEATSLAVQPDLRANLSARTFAFYYLCGERDSKFRALAAELAADCHVIPRAGHNAHRENPAGVIASLAQILRF.

It belongs to the AB hydrolase superfamily. MenH family. In terms of assembly, monomer.

The enzyme catalyses 5-enolpyruvoyl-6-hydroxy-2-succinyl-cyclohex-3-ene-1-carboxylate = (1R,6R)-6-hydroxy-2-succinyl-cyclohexa-2,4-diene-1-carboxylate + pyruvate. It participates in quinol/quinone metabolism; 1,4-dihydroxy-2-naphthoate biosynthesis; 1,4-dihydroxy-2-naphthoate from chorismate: step 3/7. Its pathway is quinol/quinone metabolism; menaquinone biosynthesis. In terms of biological role, catalyzes a proton abstraction reaction that results in 2,5-elimination of pyruvate from 2-succinyl-5-enolpyruvyl-6-hydroxy-3-cyclohexene-1-carboxylate (SEPHCHC) and the formation of 2-succinyl-6-hydroxy-2,4-cyclohexadiene-1-carboxylate (SHCHC). The chain is 2-succinyl-6-hydroxy-2,4-cyclohexadiene-1-carboxylate synthase from Escherichia coli (strain ATCC 8739 / DSM 1576 / NBRC 3972 / NCIMB 8545 / WDCM 00012 / Crooks).